A 331-amino-acid chain; its full sequence is Vitamin B12 import system permease protein BtuC (331 aa).

9 helical membrane passes run 20-42, 62-84, 91-113, 117-136, 148-170, 190-209, 240-262, 277-296, and 303-325; these read VMLAVLLVLSALYLMVGEVFLSP, LVAAMVIGAALAVSGATLQVLLG, GVLGISGGASLAMVIALFLLPVM, TVFMLAAIIGALVFTLILVG, MLLVGVALGILSGAFVTWAFYFS, SWHHHLVTLVLLPVLVWLCL, LAISILIGCAVALGGIISFVGLV, FLLPLSAFAGATLLVFSDIW, and SAELPLGVMTTTIGAPIFIWMLI.

It belongs to the binding-protein-dependent transport system permease family. FecCD subfamily. The complex is composed of two ATP-binding proteins (BtuD), two transmembrane proteins (BtuC) and a solute-binding protein (BtuF).

It is found in the cell inner membrane. Its function is as follows. Part of the ABC transporter complex BtuCDF involved in vitamin B12 import. Involved in the translocation of the substrate across the membrane. In Vibrio vulnificus (strain CMCP6), this protein is Vitamin B12 import system permease protein BtuC.